The primary structure comprises 647 residues: DNA polymerase subunit gamma-1 (647 aa).

The disordered stretch occupies residues 116–147 (ERPGRAEQSQMQDEDGLPELVEESSQPSFHHG). Over residues 127-137 (QDEDGLPELVE) the composition is skewed to acidic residues.

The protein belongs to the DNA polymerase type-A family. As to quaternary structure, heterotrimer composed of a catalytic subunit and a homodimer of accessory subunits. Interacts with TTC3. Mg(2+) is required as a cofactor.

The protein localises to the mitochondrion. The protein resides in the mitochondrion matrix. It localises to the mitochondrion nucleoid. The catalysed reaction is DNA(n) + a 2'-deoxyribonucleoside 5'-triphosphate = DNA(n+1) + diphosphate. Its function is as follows. Involved in the replication of mitochondrial DNA. Associates with mitochondrial DNA. This Gallus gallus (Chicken) protein is DNA polymerase subunit gamma-1 (POLG).